Consider the following 613-residue polypeptide: UvrABC system protein C (613 aa).

The GIY-YIG domain occupies 20 to 98 (ERPGVYLMYD…IKRHKPRYNI (79 aa)). The 36-residue stretch at 209-244 (FDVIESLGHKMQQASDEFEFEKAALYRDKISALRAI) folds into the UVR domain.

This sequence belongs to the UvrC family. Interacts with UvrB in an incision complex.

The protein resides in the cytoplasm. The UvrABC repair system catalyzes the recognition and processing of DNA lesions. UvrC both incises the 5' and 3' sides of the lesion. The N-terminal half is responsible for the 3' incision and the C-terminal half is responsible for the 5' incision. This is UvrABC system protein C from Hydrogenovibrio crunogenus (strain DSM 25203 / XCL-2) (Thiomicrospira crunogena).